We begin with the raw amino-acid sequence, 532 residues long: Tegument protein UL21 (532 aa).

A disordered region spans residues 251-276 (SPSVSSAPPPSAPDASLPPPGLQEAA). Residues 257-276 (APPPSAPDASLPPPGLQEAA) show a composition bias toward pro residues.

It belongs to the alphaherpesvirinae UL21 protein family. As to quaternary structure, interacts (via C-terminus) with UL16.

The protein resides in the virion tegument. The protein localises to the host cytoplasm. It localises to the host nucleus. May participate in DNA packaging/capsid maturation events. Promotes efficient incorporation of tegument proteins UL46, UL49, and US3 into virions. May also play a role in capsid transport to the trans-Golgi network (TGN). The sequence is that of Tegument protein UL21 from Human herpesvirus 2 (strain HG52) (HHV-2).